Here is a 261-residue protein sequence, read N- to C-terminus: Ribonuclease PH (261 aa).

Phosphate is bound by residues R86 and 124–126 (GTR).

Belongs to the RNase PH family. As to quaternary structure, homohexameric ring arranged as a trimer of dimers.

The catalysed reaction is tRNA(n+1) + phosphate = tRNA(n) + a ribonucleoside 5'-diphosphate. Phosphorolytic 3'-5' exoribonuclease that plays an important role in tRNA 3'-end maturation. Removes nucleotide residues following the 3'-CCA terminus of tRNAs; can also add nucleotides to the ends of RNA molecules by using nucleoside diphosphates as substrates, but this may not be physiologically important. Probably plays a role in initiation of 16S rRNA degradation (leading to ribosome degradation) during starvation. The chain is Ribonuclease PH from Persephonella marina (strain DSM 14350 / EX-H1).